A 567-amino-acid polypeptide reads, in one-letter code: DNA ligase B (567 aa).

Residue Lys-132 is the N6-AMP-lysine intermediate of the active site.

This sequence belongs to the NAD-dependent DNA ligase family. LigB subfamily.

The catalysed reaction is NAD(+) + (deoxyribonucleotide)n-3'-hydroxyl + 5'-phospho-(deoxyribonucleotide)m = (deoxyribonucleotide)n+m + AMP + beta-nicotinamide D-nucleotide.. Functionally, catalyzes the formation of phosphodiester linkages between 5'-phosphoryl and 3'-hydroxyl groups in double-stranded DNA using NAD as a coenzyme and as the energy source for the reaction. In Yersinia pestis, this protein is DNA ligase B.